The chain runs to 256 residues: Pimeloyl-[acyl-carrier protein] methyl ester esterase (256 aa).

The AB hydrolase-1 domain occupies 15–242; sequence HLVLLHGWGL…AAHAPFISHP (228 aa). Substrate is bound by residues Trp22, 82 to 83, and 143 to 147; these read SL and FLALQ. Residue Ser82 is the Nucleophile of the active site. Active-site residues include Asp207 and His235. His235 is a substrate binding site.

It belongs to the AB hydrolase superfamily. Carboxylesterase BioH family. As to quaternary structure, monomer.

It localises to the cytoplasm. It carries out the reaction 6-carboxyhexanoyl-[ACP] methyl ester + H2O = 6-carboxyhexanoyl-[ACP] + methanol + H(+). It participates in cofactor biosynthesis; biotin biosynthesis. Its function is as follows. The physiological role of BioH is to remove the methyl group introduced by BioC when the pimeloyl moiety is complete. It allows to synthesize pimeloyl-ACP via the fatty acid synthetic pathway through the hydrolysis of the ester bonds of pimeloyl-ACP esters. The sequence is that of Pimeloyl-[acyl-carrier protein] methyl ester esterase from Escherichia coli O45:K1 (strain S88 / ExPEC).